Here is a 301-residue protein sequence, read N- to C-terminus: Oxygen-dependent coproporphyrinogen-III oxidase (301 aa).

Serine 94 is a binding site for substrate. Positions 98 and 108 each coordinate a divalent metal cation. The active-site Proton donor is the histidine 108. Substrate is bound at residue asparagine 110–arginine 112. Residues histidine 147 and histidine 177 each coordinate a divalent metal cation. Residues tyrosine 242–glutamate 277 form an important for dimerization region. Glycine 260–arginine 262 is a substrate binding site.

It belongs to the aerobic coproporphyrinogen-III oxidase family. Homodimer. Requires a divalent metal cation as cofactor.

It is found in the cytoplasm. It carries out the reaction coproporphyrinogen III + O2 + 2 H(+) = protoporphyrinogen IX + 2 CO2 + 2 H2O. Its pathway is porphyrin-containing compound metabolism; protoporphyrin-IX biosynthesis; protoporphyrinogen-IX from coproporphyrinogen-III (O2 route): step 1/1. Its function is as follows. Involved in the heme biosynthesis. Catalyzes the aerobic oxidative decarboxylation of propionate groups of rings A and B of coproporphyrinogen-III to yield the vinyl groups in protoporphyrinogen-IX. This chain is Oxygen-dependent coproporphyrinogen-III oxidase, found in Photobacterium profundum (strain SS9).